A 348-amino-acid chain; its full sequence is Chemokine C-C motif receptor-like 2 (348 aa).

Residues 1–43 (MANYTPAPEDDYDVFIEDDLSDDEIEPCTPYDPKILSAQLVPY) are Extracellular-facing. Residues 44-64 (LYTTVFMVGLLDNILVVFILV) traverse the membrane as a helical segment. Residues 65–76 (KYKGLRQAENMS) are Cytoplasmic-facing. The helical transmembrane segment at 77–97 (FLNLALSNLGFLLTLPFWAYA) threads the bilayer. Over 98-110 (ASHGEGFDDPLCK) the chain is Extracellular. C109 and C187 are disulfide-bonded. A helical membrane pass occupies residues 111–131 (ILLLLYSIGLYSEAFFNVLLT). At 132 to 150 (VQRYKEFFHVRRRFSACRT) the chain is on the cytoplasmic side. Residues 151 to 171 (VAGSIFISVLVWVTATLVTLP) traverse the membrane as a helical segment. Over 172-204 (ELVSYKPQMQSQKYKCFFTGLHFLPADETFWKH) the chain is Extracellular. A helical transmembrane segment spans residues 205–225 (FLTLKMNILGFLLPLFAFVYC). Over 226-244 (YVRMRKTLQFRERNYGLFK) the chain is Cytoplasmic. A helical transmembrane segment spans residues 245–265 (LVFTIMAVFLLMWGPYNIVLF). The Extracellular portion of the chain corresponds to 266–292 (LSAFNEHFSLHGCGSSYNLNKSVQITR). An N-linked (GlcNAc...) asparagine glycan is attached at N285. A helical transmembrane segment spans residues 293–313 (IIAATHCCVNPLLYVFLDKAF). Topologically, residues 314 to 348 (RKHLCHLFYLCSDTAPQPTEEPAQGASGEEYHLSS) are cytoplasmic.

Belongs to the G-protein coupled receptor 1 family.

Its subcellular location is the cell membrane. Functionally, receptor for CCL19 and chemerin/RARRES2. Does not appear to be a signaling receptor, but may have a role in modulating chemokine-triggered immune responses by capturing and internalizing CCL19 or by presenting RARRES2 ligand to CMKLR1, a functional signaling receptor. Plays a critical role for the development of Th2 responses. The chain is Chemokine C-C motif receptor-like 2 (CCRL2) from Bos taurus (Bovine).